A 407-amino-acid chain; its full sequence is Histidine--tRNA ligase (407 aa).

This sequence belongs to the class-II aminoacyl-tRNA synthetase family. In terms of assembly, homodimer.

Its subcellular location is the cytoplasm. The enzyme catalyses tRNA(His) + L-histidine + ATP = L-histidyl-tRNA(His) + AMP + diphosphate + H(+). This Wolbachia pipientis subsp. Culex pipiens (strain wPip) protein is Histidine--tRNA ligase.